The primary structure comprises 49 residues: Astexin-2 (49 aa).

Positions 1 to 25 (MTKRTTIAARRVGLIDLGKATRQTK) are excised as a propeptide. The segment at residues 26–34 (GLTQIQALD) is a cross-link (isoaspartyl glycine isopeptide (Gly-Asp)).

In terms of processing, this lasso peptide is hydrolyzed to a linear form by the isopeptidase AtxE2, in vitro. The isopeptidase AtxE2 only recognizes the threaded form (but not the unthreaded form).

It localises to the cytoplasm. Its subcellular location is the secreted. Its function is as follows. Shows weak antimicrobial activity against its phylogenetic relative Caulobacter crescentus. Does not show activity against other bacteria tested (E.coli, Vibrio sp, Burkhoderia thailandensis, and Salmonella newport). In Asticcacaulis excentricus (strain ATCC 15261 / DSM 4724 / KCTC 12464 / NCIMB 9791 / VKM B-1370 / CB 48), this protein is Astexin-2.